Reading from the N-terminus, the 295-residue chain is Ribosomal protein L11 methyltransferase (295 aa).

Residues Thr145, Gly166, Asp188, and Asn230 each coordinate S-adenosyl-L-methionine.

The protein belongs to the methyltransferase superfamily. PrmA family.

The protein resides in the cytoplasm. The enzyme catalyses L-lysyl-[protein] + 3 S-adenosyl-L-methionine = N(6),N(6),N(6)-trimethyl-L-lysyl-[protein] + 3 S-adenosyl-L-homocysteine + 3 H(+). Its function is as follows. Methylates ribosomal protein L11. In Pectobacterium carotovorum subsp. carotovorum (strain PC1), this protein is Ribosomal protein L11 methyltransferase.